The following is an 817-amino-acid chain: MAQPKIPEYKANGTTDKLPETVPIMPLSDGVLFPKMIIPVVITQNEYMTLIDEVMSGNRLVALITPKSGERKSDYGPGDLSPIGTLALILKMAKPDESRIHLMLQGISRIRTKNFIKTDPYLEAAFAQITENEKKDKETEGLMSNISNVYQELVRISPAIPNELGAMAVTIDEPGSLADMVASTINSSTEEKQNILETLDVKLRLKKVTRQLNHQLEILKLGDKIQSQIKEDMDKQQKEFYLRKQLKAIREELGEKEEGNVEAEEYRTKIEEGNLPEEAYKAATRELERFSRMHPSSSEYTVSSTYLDWLTTLPWDKQTEDHLDIKKARAILDKDHFGLEKPKKRILEYLAVRKLNPDSKGPILCFLGPPGTGKTSLGRSIARALGREFIRISLGGVRDEAEIRGHRRTYVGALPGRIIQEIRKAGTNNPVFMLDEIDKVGADFKGDPSSALLEVLDPEQNFSFADHYLDVSFDLSRVMFVATANVIDTIPPALRDRMEVIGLRGYTLEEKVKIARQYLIPRQRKENGLAAKHISFSQSAIRHIISDYTREAGLRNAEREIASVCRGVAAKIAEGKKVSGAIKPEDLYEYLGPVRFTSETGENALTPGVVMGLAWTPVGGEILFIEATSMKGKRGLTLTGQLGDVMKESATAALSFIRAHARDYDIDEDFFDKYDFHIHVPSGAIPKDGPSAGVTMLTALVSLLTGRKVKKGLAMTGEITLRGKVMPVGGIKEKVIAAHRAGIKEVILPRPNKKDLEEIPAKVKSAMKFHFAEKMGDVLELALNGNGATKKKKKTPAKSKKSTKPAAKKTAARKSRK.

Residues 22-216 form the Lon N-terminal domain; sequence VPIMPLSDGV…KVTRQLNHQL (195 aa). Position 368–375 (368–375) interacts with ATP; that stretch reads GPPGTGKT. Positions 604-785 constitute a Lon proteolytic domain; the sequence is ALTPGVVMGL…GDVLELALNG (182 aa). Catalysis depends on residues S691 and K734. The disordered stretch occupies residues 784–817; sequence NGNGATKKKKKTPAKSKKSTKPAAKKTAARKSRK. The span at 789 to 817 shows a compositional bias: basic residues; sequence TKKKKKTPAKSKKSTKPAAKKTAARKSRK.

It belongs to the peptidase S16 family. As to quaternary structure, homohexamer. Organized in a ring with a central cavity.

Its subcellular location is the cytoplasm. It carries out the reaction Hydrolysis of proteins in presence of ATP.. Functionally, ATP-dependent serine protease that mediates the selective degradation of mutant and abnormal proteins as well as certain short-lived regulatory proteins. Required for cellular homeostasis and for survival from DNA damage and developmental changes induced by stress. Degrades polypeptides processively to yield small peptide fragments that are 5 to 10 amino acids long. Binds to DNA in a double-stranded, site-specific manner. The polypeptide is Lon protease (Desulfosudis oleivorans (strain DSM 6200 / JCM 39069 / Hxd3) (Desulfococcus oleovorans)).